We begin with the raw amino-acid sequence, 127 residues long: Small ribosomal subunit protein bS6 (127 aa).

It belongs to the bacterial ribosomal protein bS6 family.

Its function is as follows. Binds together with bS18 to 16S ribosomal RNA. The sequence is that of Small ribosomal subunit protein bS6 from Buchnera aphidicola subsp. Cinara cedri (strain Cc).